A 168-amino-acid polypeptide reads, in one-letter code: ATP synthase subunit b (168 aa).

A helical membrane pass occupies residues 11-31; that stretch reads EISIINTLWYLIVFSILLLAV.

Belongs to the ATPase B chain family. In terms of assembly, F-type ATPases have 2 components, F(1) - the catalytic core - and F(0) - the membrane proton channel. F(1) has five subunits: alpha(3), beta(3), gamma(1), delta(1), epsilon(1). F(0) has three main subunits: a(1), b(2) and c(10-14). The alpha and beta chains form an alternating ring which encloses part of the gamma chain. F(1) is attached to F(0) by a central stalk formed by the gamma and epsilon chains, while a peripheral stalk is formed by the delta and b chains.

Its subcellular location is the cell membrane. Functionally, f(1)F(0) ATP synthase produces ATP from ADP in the presence of a proton or sodium gradient. F-type ATPases consist of two structural domains, F(1) containing the extramembraneous catalytic core and F(0) containing the membrane proton channel, linked together by a central stalk and a peripheral stalk. During catalysis, ATP synthesis in the catalytic domain of F(1) is coupled via a rotary mechanism of the central stalk subunits to proton translocation. Its function is as follows. Component of the F(0) channel, it forms part of the peripheral stalk, linking F(1) to F(0). The protein is ATP synthase subunit b of Lactobacillus delbrueckii subsp. bulgaricus (strain ATCC 11842 / DSM 20081 / BCRC 10696 / JCM 1002 / NBRC 13953 / NCIMB 11778 / NCTC 12712 / WDCM 00102 / Lb 14).